Reading from the N-terminus, the 497-residue chain is 4,4'-diaponeurosporene oxygenase (497 aa).

7 to 19 provides a ligand contact to FAD; the sequence is VIGGGLGGISAAI.

This sequence belongs to the carotenoid/retinoid oxidoreductase family. CrtP subfamily. The cofactor is FAD.

The catalysed reaction is all-trans-4,4'-diaponeurosporene + 2 AH2 + 2 O2 = 4,4'-diaponeurosporenal + 2 A + 3 H2O. It participates in carotenoid biosynthesis; staphyloxanthin biosynthesis; staphyloxanthin from farnesyl diphosphate: step 3/5. Involved in the biosynthesis of the yellow-orange carotenoid staphyloxanthin, which plays a role in the virulence via its protective function against oxidative stress. Catalyzes the oxidation of the terminal methyl side group of 4,4'-diaponeurosporene to form 4,4'-diaponeurosporen-4-al. The sequence is that of 4,4'-diaponeurosporene oxygenase from Staphylococcus aureus (strain USA300).